The chain runs to 49 residues: Lysozyme C (49 aa).

Residues 1–49 enclose the C-type lysozyme domain; sequence SKMKKCEFAKIAKEQHMDGYHGVSLADWVCLVNNESDFNTKAINRNKGI. The active site involves Glu35.

This sequence belongs to the glycosyl hydrolase 22 family. In terms of assembly, monomer.

The protein resides in the secreted. It catalyses the reaction Hydrolysis of (1-&gt;4)-beta-linkages between N-acetylmuramic acid and N-acetyl-D-glucosamine residues in a peptidoglycan and between N-acetyl-D-glucosamine residues in chitodextrins.. In terms of biological role, lysozymes have primarily a bacteriolytic function; those in tissues and body fluids are associated with the monocyte-macrophage system and enhance the activity of immunoagents. This Pseudocheirus peregrinus (Common ring-tailed possum) protein is Lysozyme C (LYZ).